The primary structure comprises 320 residues: o-succinylbenzoate synthase (320 aa).

The Proton donor role is filled by Lys133. 3 residues coordinate Mg(2+): Asp161, Glu190, and Asp213. The Proton acceptor role is filled by Lys235.

This sequence belongs to the mandelate racemase/muconate lactonizing enzyme family. MenC type 1 subfamily. A divalent metal cation is required as a cofactor.

The enzyme catalyses (1R,6R)-6-hydroxy-2-succinyl-cyclohexa-2,4-diene-1-carboxylate = 2-succinylbenzoate + H2O. It participates in quinol/quinone metabolism; 1,4-dihydroxy-2-naphthoate biosynthesis; 1,4-dihydroxy-2-naphthoate from chorismate: step 4/7. Its pathway is quinol/quinone metabolism; menaquinone biosynthesis. Converts 2-succinyl-6-hydroxy-2,4-cyclohexadiene-1-carboxylate (SHCHC) to 2-succinylbenzoate (OSB). The polypeptide is o-succinylbenzoate synthase (Escherichia coli O139:H28 (strain E24377A / ETEC)).